The primary structure comprises 301 residues: Methionyl-tRNA formyltransferase (301 aa).

(6S)-5,6,7,8-tetrahydrofolate is bound at residue 109–112 (SLLP).

The protein belongs to the Fmt family.

It catalyses the reaction L-methionyl-tRNA(fMet) + (6R)-10-formyltetrahydrofolate = N-formyl-L-methionyl-tRNA(fMet) + (6S)-5,6,7,8-tetrahydrofolate + H(+). In terms of biological role, attaches a formyl group to the free amino group of methionyl-tRNA(fMet). The formyl group appears to play a dual role in the initiator identity of N-formylmethionyl-tRNA by promoting its recognition by IF2 and preventing the misappropriation of this tRNA by the elongation apparatus. The polypeptide is Methionyl-tRNA formyltransferase (Ruegeria pomeroyi (strain ATCC 700808 / DSM 15171 / DSS-3) (Silicibacter pomeroyi)).